Here is a 437-residue protein sequence, read N- to C-terminus: MAVSKVYARSVYDSRGNPTVEVELTTEKGVFRSIVPSGASTGVHEALEMRDGDKSKWMGKGVLHAVKNVNDVIAPAFVKANIDVKDQKAVDDFLISLDGTANKSKLGANAILGVSLAASRAAAAEKNVPLYKHLADLSKSKTSPYVLPVPFLNVLNGGSHAGGALALQEFMIAPTGAKTFAEALRIGSEVYHNLKSLTKKRYGASAGNVGDEGGVAPNIQTAEEALDLIVDAIKAAGHDGKIKIGLDCASSEFFKDGKYDLDFKNPNSDKSKWLTGPQLADLYHSLMKRYPIVSIEDPFAEDDWEAWSHFFKTAGIQIVADDLTVTNPKRIATAIEKKAADALLLKVNQIGTLSESIKAAQDSFAAGWGVMVSHRSGETEDTFIADLVVGLRTGQIKTGAPARSERLAKLNQLLRIEEELGDNAVFAGENFHHGDKL.

K60 participates in a covalent cross-link: Glycyl lysine isopeptide (Lys-Gly) (interchain with G-Cter in ubiquitin). S119 and S138 each carry phosphoserine. Residues H160 and E169 each coordinate substrate. Residue S188 is modified to Phosphoserine. E212 (proton donor) is an active-site residue. K243 is covalently cross-linked (Glycyl lysine isopeptide (Lys-Gly) (interchain with G-Cter in ubiquitin)). D247 and E296 together coordinate Mg(2+). E296 lines the substrate pocket. T313 carries the phosphothreonine modification. Residue D321 participates in substrate binding. D321 contacts Mg(2+). Position 324 is a phosphothreonine (T324). K346 acts as the Proton acceptor in catalysis. K358 is covalently cross-linked (Glycyl lysine isopeptide (Lys-Gly) (interchain with G-Cter in ubiquitin)). Substrate-binding positions include S373 to S376 and K397.

Belongs to the enolase family. Homodimer. The cofactor is Mg(2+).

The protein localises to the cytoplasm. It carries out the reaction (2R)-2-phosphoglycerate = phosphoenolpyruvate + H2O. It participates in carbohydrate degradation; glycolysis; pyruvate from D-glyceraldehyde 3-phosphate: step 4/5. The chain is Enolase 1 (ENO1) from Saccharomyces cerevisiae (strain ATCC 204508 / S288c) (Baker's yeast).